The following is a 475-amino-acid chain: Ribulose bisphosphate carboxylase large chain (475 aa).

The propeptide occupies 1–2 (MS). The residue at position 3 (proline 3) is an N-acetylproline. Lysine 14 is subject to N6,N6,N6-trimethyllysine. Positions 123 and 173 each coordinate substrate. Lysine 175 functions as the Proton acceptor in the catalytic mechanism. Residue lysine 177 participates in substrate binding. Positions 201, 203, and 204 each coordinate Mg(2+). Lysine 201 is modified (N6-carboxylysine). Residue histidine 294 is the Proton acceptor of the active site. Substrate is bound by residues arginine 295, histidine 327, and serine 379.

The protein belongs to the RuBisCO large chain family. Type I subfamily. Heterohexadecamer of 8 large chains and 8 small chains; disulfide-linked. The disulfide link is formed within the large subunit homodimers. Mg(2+) is required as a cofactor. The disulfide bond which can form in the large chain dimeric partners within the hexadecamer appears to be associated with oxidative stress and protein turnover.

It is found in the plastid. The protein localises to the chloroplast. The catalysed reaction is 2 (2R)-3-phosphoglycerate + 2 H(+) = D-ribulose 1,5-bisphosphate + CO2 + H2O. It carries out the reaction D-ribulose 1,5-bisphosphate + O2 = 2-phosphoglycolate + (2R)-3-phosphoglycerate + 2 H(+). RuBisCO catalyzes two reactions: the carboxylation of D-ribulose 1,5-bisphosphate, the primary event in carbon dioxide fixation, as well as the oxidative fragmentation of the pentose substrate in the photorespiration process. Both reactions occur simultaneously and in competition at the same active site. In Zygnema circumcarinatum (Green alga), this protein is Ribulose bisphosphate carboxylase large chain.